The following is a 136-amino-acid chain: Histone H3.2 (136 aa).

The disordered stretch occupies residues 1 to 43 (MARTKQTARKSTGGKAPRKQLATKAARKSAPATGGVKKPHRFR). N6,N6,N6-trimethyllysine; alternate is present on residues Lys5 and Lys10. N6,N6-dimethyllysine; alternate occurs at positions 5 and 10. Residues Lys5 and Lys10 each carry the N6-methyllysine; alternate modification. The residue at position 10 (Lys10) is an N6-acetyllysine; alternate. The residue at position 11 (Ser11) is a Phosphoserine. Thr12 carries the phosphothreonine modification. An N6-acetyllysine modification is found at Lys15. 3 positions are modified to N6-methyllysine; alternate: Lys19, Lys24, and Lys28. An N6-acetyllysine; alternate mark is found at Lys19 and Lys24. Lys28 is subject to N6,N6,N6-trimethyllysine; alternate. Lys28 is modified (N6,N6-dimethyllysine; alternate). Ser29 bears the Phosphoserine mark. N6,N6,N6-trimethyllysine; alternate is present on Lys37. Lys37 bears the N6,N6-dimethyllysine; alternate mark. Lys37 is subject to N6-methyllysine; alternate.

This sequence belongs to the histone H3 family. As to quaternary structure, the nucleosome is a histone octamer containing two molecules each of H2A, H2B, H3 and H4 assembled in one H3-H4 heterotetramer and two H2A-H2B heterodimers. The octamer wraps approximately 147 bp of DNA. Acetylation is generally linked to gene activation. Can be acetylated to form H3K9ac, H3K14ac, H3K18ac and H3K23ac. H3K9ac could compete with H3K9me and prevent gene silencing. H3K9ac is restricted to euchromatin. Post-translationally, methylated to form mainly H3K4me, H3K9me, H3K18me, H3K23me, H3K27me and H3K36me. H3K4me1/2/3, H3K9me3, H3K27me3 and H3K36me1/2/3 are typical marks for euchromatin, whereas heterochromatic chromocenters are enriched in H3K9me1/2 and H3K27me1/2. H2BK143ub1 is probably prerequisite for H3K4me. In terms of processing, can be phosphorylated to form H3S10ph, H3T11ph and H3S28ph.

It localises to the nucleus. The protein resides in the chromosome. In terms of biological role, core component of nucleosome. Nucleosomes wrap and compact DNA into chromatin, limiting DNA accessibility to the cellular machineries which require DNA as a template. Histones thereby play a central role in transcription regulation, DNA repair, DNA replication and chromosomal stability. DNA accessibility is regulated via a complex set of post-translational modifications of histones, also called histone code, and nucleosome remodeling. The polypeptide is Histone H3.2 (Brassica napus (Rape)).